We begin with the raw amino-acid sequence, 286 residues long: Carbohydrate-binding domain-containing protein Cthe_2159 (286 aa).

A signal peptide spans 1 to 20; the sequence is MSIKKLILAASILTTLALTG. Cysteine 21 is lipidated: N-palmitoyl cysteine. Cysteine 21 is lipidated: S-diacylglycerol cysteine. Residues 124 to 225 form a polygalacturonic acid-binding region; that stretch reads GKDNVLTDAE…GIKVENTEEP (102 aa). Residues arginine 152, aspartate 153, aspartate 154, asparagine 177, aspartate 178, aspartate 215, aspartate 243, aspartate 244, and aspartate 247 each coordinate Ca(2+).

Monomer.

The protein localises to the cell membrane. In terms of biological role, binds cellulosic and pectic substrates. Displays no enzyme activity (in vitro). In Acetivibrio thermocellus (strain ATCC 27405 / DSM 1237 / JCM 9322 / NBRC 103400 / NCIMB 10682 / NRRL B-4536 / VPI 7372) (Clostridium thermocellum), this protein is Carbohydrate-binding domain-containing protein Cthe_2159.